The following is a 557-amino-acid chain: Potassium-transporting ATPase potassium-binding subunit (557 aa).

12 helical membrane passes run 5 to 25 (GFLLIATFLLVLMVLARPLGS), 63 to 83 (LSAILGLNILGLAVLFFMLLG), 132 to 152 (GLTVQNFLSAASGIAVIFALI), 170 to 190 (LLRITLWVLAPVALLIALFFI), 253 to 273 (FVQMLAIFLIPTALCFAFGEV), 283 to 303 (LLWAMSVIFVICTGVVMWAEV), 329 to 349 (VLVSSLFAVVTTAASCGAVIA), 356 to 376 (ALGGMVPMWLMQIGEVVFGGV), 379 to 399 (GLYGMMLFVLLAVFIAGLMIG), 416 to 436 (LTALAILVTPTLVLMGAALAM), 484 to 504 (LLALCMFVGRFGVIIPVMAIA), and 526 to 546 (LFVGLLIGTVLLVGALTFIPA).

The protein belongs to the KdpA family. The system is composed of three essential subunits: KdpA, KdpB and KdpC.

It is found in the cell inner membrane. Its function is as follows. Part of the high-affinity ATP-driven potassium transport (or Kdp) system, which catalyzes the hydrolysis of ATP coupled with the electrogenic transport of potassium into the cytoplasm. This subunit binds the periplasmic potassium ions and delivers the ions to the membrane domain of KdpB through an intramembrane tunnel. The polypeptide is Potassium-transporting ATPase potassium-binding subunit (Escherichia coli O6:H1 (strain CFT073 / ATCC 700928 / UPEC)).